The chain runs to 254 residues: Probable derlin-2 homolog (254 aa).

Residues 1–17 (MAQPFEDWYKNLPIVTK) are Cytoplasmic-facing. Residues 18-38 (IYMTGCVVTSVSVYLGLVGPL) form a helical membrane-spanning segment. Residues 39-95 (RLYLNFPLVFGKYEFWRLFTNFFFYDEIGMNFFFHMYFLVRHSRLLEESSFRGRSAD) lie on the Lumenal side of the membrane. A helical membrane pass occupies residues 96–116 (YLFMWIFGSFLLLIMDAFLFY). At 117 to 118 (TK) the chain is on the cytoplasmic side. Residues 119–139 (IVTKVLFLAPSIAFMVIYVWS) traverse the membrane as a helical segment. Over 140-146 (RRNPNMH) the chain is Lumenal. Residues 147 to 167 (ISFLGLFTFSAPYLPWVILIM) traverse the membrane as a helical segment. Residues 168–254 (GYLFNHDLTT…FLNEDDLDQQ (87 aa)) lie on the Cytoplasmic side of the membrane.

It belongs to the derlin family.

The protein localises to the endoplasmic reticulum membrane. May be involved in the degradation process of specific misfolded endoplasmic reticulum (ER) luminal proteins. May also be involved in endoplasmic reticulum stress-induced pre-emptive quality control, a mechanism that selectively attenuates the translocation of newly synthesized proteins into the endoplasmic reticulum and reroutes them to the cytosol for proteasomal degradation. This Dictyostelium discoideum (Social amoeba) protein is Probable derlin-2 homolog (derl2).